The primary structure comprises 610 residues: MTKNVLVSVAWPYANGPRHIGHVAGFGVPSDVFARFQRMSGNNVLMVSGTDEHGTPLLVQADKEGVTVQDLADKYNRQIVEDLTGLGLSYDLFTRTTTSNHYAVVQELFRGLYDNGYMIKETTLGAISPSTGRTLPDRYIEGTCPICGTDGARGDQCDNCGNQLDPADLINPVSKINGETPEFVETEHFLLDLPALAEALTEWLKGREDWRPNVLKFSLNLLDDIRPRAMSRDIDWGIPIPVEGWQDNNAKKLYVWFDAVVGYLSASIEWAYRSGDPEAWRTFWNDPETKSYYFMGKDNITFHSQIWPAELLGYAGKGSRGGEIGDLGVLNLPTEVVSSEFLTMSGSKFSSSKGVVIYVKDFLKEFGPDALRYFIAVAGPENNDTDFTWDEFVRRVNNELANGWGNLVNRTVSMAHKNFGEVPVPGALEESDKKILDLATAAFESVAANLDQSKFKAGISEIMHVVGEANAYIAEQEPWKLAKDDTKRERLATVLWTALQVVSDCNTMLTPYLPHTAQKVHETLGRDGIWAASPQIVEVTNESPRQPIGVGLPDPEHTYPVIMGDYKTQLAKWQRIDVVPGTTLEKPAPLIAKLDPELGETGPEWAPVQN.

Residues 12–22 carry the 'HIGH' region motif; it reads PYANGPRHIGH. Cysteine 144, cysteine 147, cysteine 157, and cysteine 160 together coordinate Zn(2+). Residues 348 to 352 carry the 'KMSKS' region motif; sequence KFSSS. Serine 351 contributes to the ATP binding site.

It belongs to the class-I aminoacyl-tRNA synthetase family. MetG type 1 subfamily. In terms of assembly, monomer. It depends on Zn(2+) as a cofactor.

Its subcellular location is the cytoplasm. The catalysed reaction is tRNA(Met) + L-methionine + ATP = L-methionyl-tRNA(Met) + AMP + diphosphate. In terms of biological role, is required not only for elongation of protein synthesis but also for the initiation of all mRNA translation through initiator tRNA(fMet) aminoacylation. The polypeptide is Methionine--tRNA ligase (Corynebacterium glutamicum (strain R)).